Here is a 478-residue protein sequence, read N- to C-terminus: Glutamyl-tRNA reductase (478 aa).

Residues 49–52, Ser109, 114–116, and Gln120 contribute to the substrate site; these read TCNR and EQQ. Cys50 functions as the Nucleophile in the catalytic mechanism. 191-196 is an NADP(+) binding site; sequence GAGSMG.

Belongs to the glutamyl-tRNA reductase family. In terms of assembly, homodimer.

It carries out the reaction (S)-4-amino-5-oxopentanoate + tRNA(Glu) + NADP(+) = L-glutamyl-tRNA(Glu) + NADPH + H(+). The protein operates within porphyrin-containing compound metabolism; protoporphyrin-IX biosynthesis; 5-aminolevulinate from L-glutamyl-tRNA(Glu): step 1/2. Its function is as follows. Catalyzes the NADPH-dependent reduction of glutamyl-tRNA(Glu) to glutamate 1-semialdehyde (GSA). The protein is Glutamyl-tRNA reductase of Rhodococcus opacus (strain B4).